We begin with the raw amino-acid sequence, 301 residues long: Phosphatidylglycerol--prolipoprotein diacylglyceryl transferase (301 aa).

Transmembrane regions (helical) follow at residues 17-37 (LAVRWYGLMYLVAFIMAIVVG), 59-79 (MLFYGVLGTILGGRFGYVLFY), 97-117 (GGMSFHGGFLGVTFAMILFAW), 129-149 (FVAPMVPAGLAAGRLGNFING), 203-223 (PSQLYEIALEGVVLFLVLWLF), 230-250 (VGAASAVFLIGYGLARFTVEF), and 257-277 (FLGLLALGLSMGQWLSLPMII). Residue Arg-142 coordinates a 1,2-diacyl-sn-glycero-3-phospho-(1'-sn-glycerol).

This sequence belongs to the Lgt family.

Its subcellular location is the cell inner membrane. It catalyses the reaction L-cysteinyl-[prolipoprotein] + a 1,2-diacyl-sn-glycero-3-phospho-(1'-sn-glycerol) = an S-1,2-diacyl-sn-glyceryl-L-cysteinyl-[prolipoprotein] + sn-glycerol 1-phosphate + H(+). Its pathway is protein modification; lipoprotein biosynthesis (diacylglyceryl transfer). Its function is as follows. Catalyzes the transfer of the diacylglyceryl group from phosphatidylglycerol to the sulfhydryl group of the N-terminal cysteine of a prolipoprotein, the first step in the formation of mature lipoproteins. This Paraburkholderia phymatum (strain DSM 17167 / CIP 108236 / LMG 21445 / STM815) (Burkholderia phymatum) protein is Phosphatidylglycerol--prolipoprotein diacylglyceryl transferase.